The primary structure comprises 312 residues: MEIIFYHPTFDTQYWICELEKQLPGARVREWKAGDNRPADYALVWHPPVEMLQGRALKAVFALGAGVDSILSKLRDHPDMLPLSIPLFRLEDTGMGRQMQEYAVSQVLHWFRRFDDYQALKLASRWQPLPEYRADEFTVGIMGAGVLGAKVAESLQPWGFPLRVWSRSRKSWPQVQSFAGQAELGEFMQGTRVLINLLPNTAETAGIINQTLLAQLPDESYVLNLARGVHVVEEDLLAALNSGKLKGAMLDVFSREPLPQESPLWAHPRVAMTPHVAAVTRPMEAITYIAETISRLERGEPVSGQVDRQRGY.

Residue Arg227 is part of the active site. His275 (proton donor) is an active-site residue.

It belongs to the D-isomer specific 2-hydroxyacid dehydrogenase family. GhrA subfamily.

The protein localises to the cytoplasm. It carries out the reaction glycolate + NADP(+) = glyoxylate + NADPH + H(+). The enzyme catalyses (R)-glycerate + NAD(+) = 3-hydroxypyruvate + NADH + H(+). It catalyses the reaction (R)-glycerate + NADP(+) = 3-hydroxypyruvate + NADPH + H(+). In terms of biological role, catalyzes the NADPH-dependent reduction of glyoxylate and hydroxypyruvate into glycolate and glycerate, respectively. In Klebsiella pneumoniae subsp. pneumoniae (strain ATCC 700721 / MGH 78578), this protein is Glyoxylate/hydroxypyruvate reductase A.